A 121-amino-acid polypeptide reads, in one-letter code: Small ribosomal subunit protein uS13 (121 aa).

Residues 93–121 are disordered; the sequence is RNLPVRGQRTRTNARTCKGPRKSMNKQFK. A compositionally biased stretch (basic residues) spans 110 to 121; the sequence is KGPRKSMNKQFK.

It belongs to the universal ribosomal protein uS13 family. Part of the 30S ribosomal subunit. Forms a loose heterodimer with protein S19. Forms two bridges to the 50S subunit in the 70S ribosome.

Functionally, located at the top of the head of the 30S subunit, it contacts several helices of the 16S rRNA. In the 70S ribosome it contacts the 23S rRNA (bridge B1a) and protein L5 of the 50S subunit (bridge B1b), connecting the 2 subunits; these bridges are implicated in subunit movement. Contacts the tRNAs in the A and P-sites. In Blochmanniella pennsylvanica (strain BPEN), this protein is Small ribosomal subunit protein uS13.